Here is a 224-residue protein sequence, read N- to C-terminus: MTKKICIAIDGPAAAGKSTVAKIVAKKLRFVYIDTGAMYRAVTYIALKNNVAYEDEMAIDALLKKTVIRFEPGEVQQVFVNEENVTDVIRSLEVTNHVSIVAAHPAIREALQERQQVFATEGGIVMDGRDIGTAVLPNAELKIFLLASVEERAERRYKENMAKGFAGDLNQLKKEIEERDHLDYTREHSPLKKANDAIEVDTTSMSIDEVANKILSLAEQKIQN.

Residue 11–19 (GPAAAGKST) coordinates ATP.

Belongs to the cytidylate kinase family. Type 1 subfamily.

It is found in the cytoplasm. It carries out the reaction CMP + ATP = CDP + ADP. The enzyme catalyses dCMP + ATP = dCDP + ADP. The chain is Cytidylate kinase from Listeria innocua serovar 6a (strain ATCC BAA-680 / CLIP 11262).